The following is a 542-amino-acid chain: MNTTGYDILRNPFLNKGTAFSEAERQQLGLTGTLPSQIQTIEEQAEQAYKQFQAKSPLLEKRIFLMNLFNENVTLFYHLMDQHVSEFMPIVYDPVVAESIEQYNEIYTNPQNAAFLSVDRPEDVENALKNAAAGRDIKLVVVTDAEGILGMGDWGVNGVDIAVGKLMVYTAAAGIDPATVLPVSIDAGTNNKELLHNPLYLGNKHERIAGEQYLEFIDKFVTAEQNLFPESLLHWEDFGRSNAQVILDKYKESIATFNDDIQGTGMIVLAGIFGALNISKQKLVDQKFVTFGAGTAGMGIVNQIFSELKQAGLSDDEARNHFYLVDKQGLLFDDTEGLTAAQKPFTRSRKEFVNPEQLINLETIVKELHPTVLIGTSTQPGTFTETIVKSMAENTERPIIFPLSNPTKLAEATAEDLIKWTGGKALVATGIPAADVDYKGVTYKIGQGNNALIYPGLGFGLVASTAKLLTQETISAAIHALGGLVDTDEPGAAVLPPVSNLTDFSQKIAEITAQSVVNQGLNREKIVDPKQAVQDAKWSAEY.

Residue tyrosine 92 is the Proton donor of the active site. Catalysis depends on lysine 165, which acts as the Proton acceptor. Lysine 165 contacts substrate. Glutamate 236, aspartate 237, and aspartate 260 together coordinate Mn(2+). NAD(+) contacts are provided by residues 293 to 296 (AGTA), asparagine 405, and asparagine 450. Asparagine 450 contributes to the substrate binding site.

This sequence belongs to the malic enzymes family. In terms of assembly, homodimer. Mn(2+) serves as cofactor. The cofactor is NAD(+).

The enzyme catalyses (S)-malate + H(+) = (S)-lactate + CO2. Its activity is regulated as follows. Oxamate, fructose-1,6-diphosphate and L-lactate act as non-competitive inhibitors, whereas succinate, citrate and tartrate isomers produce a competitive inhibition. Its function is as follows. Involved in the malolactic fermentation (MLF) of wine, which results in a natural decrease in acidity and favorable changes in wine flavors. Catalyzes the decarboxylation of L-malate to L-lactate. In Leuconostoc mesenteroides, this protein is Malolactic enzyme (mleS).